The sequence spans 30 residues: Toxic protein AapA1 (30 aa).

This sequence belongs to the AapA toxin family.

Its subcellular location is the cell inner membrane. With respect to regulation, transcription of the aapA1 gene generates a full-length transcript whose folding impedes translation. Processing of the 3' end of the aapA1 message generates a shorter transcript that becomes translatable after a structural rearrangement. The processing also makes it more susceptible to forming dsRNA with IsoA1 which leads to duplex RNA degradation by RNase 3 (rnc). Its function is as follows. May be involved in response to oxidative stress. Toxic component of a type I toxin-antitoxin (TA) system. When overexpression is induced in situ in the absence of its cognate antisense RNA antitoxin IsoA1 it leads to cell growth arrest and cell death without lysis. Neutralized by IsoA1 RNA which forms an extensive duplex with the mRNA. Binds artificial prokaryotic and eukaryotic lipid membranes, with 30-fold higher affinity for prokaryotic membranes. Molecular dynamics suggests the peptide penetrates the membrane leading to lipid reorganization and thinning of the bilayer. Induction of toxin in the absence of antitoxin RNA causes a fast conversion of cells from spiral-shaped to coccoid forms; cells have no visible membrane defects and resemble wild-type 'aging coccoids'. Toxin causes a moderate decrease in membrane potential and ATP content and alterations in peptidoglycan muropeptide abundance; GlcNAc-MurNAc dipeptides increase while GlcNAc-MurNAc tripeptides decrease (i.e. a faster phenocopy of cell aging). Deletion of all 6 AapA/IsoA TA loci in strain B128 leads to slower than wild-type conversion of H2O2-treated cells to the coccoid form. This suggests oxidative stress triggers coccoid transformation via these type I TA systems, although other factors eventually drive the morphology change. The protein is Toxic protein AapA1 of Helicobacter pylori (strain ATCC 700392 / 26695) (Campylobacter pylori).